Here is a 194-residue protein sequence, read N- to C-terminus: MLSSPLRVAVVCVSNVNRSMEAHSILRRKGLSVRSFGTESHVRLPGPRPNRPVVYDFATTYKQMYNDLLRKDRERYTRNGILHILGRNERIKPGPERFQECTDSFDVIFTCEESVYDTVVEDLCSREQQTFQPVHVINMDIQDTLEDATLGAFLICEICQCLQQSDDIEDNLEELLLQMEEKAGKSFLHTVCFY.

The protein belongs to the SSU72 phosphatase family.

Its subcellular location is the nucleus. The catalysed reaction is O-phospho-L-seryl-[protein] + H2O = L-seryl-[protein] + phosphate. It carries out the reaction O-phospho-L-threonyl-[protein] + H2O = L-threonyl-[protein] + phosphate. Functionally, protein phosphatase that catalyzes the dephosphorylation of the C-terminal domain of RNA polymerase II. Plays a role in RNA processing and termination. The protein is RNA polymerase II subunit A C-terminal domain phosphatase SSU72 like protein 3 of Homo sapiens (Human).